We begin with the raw amino-acid sequence, 521 residues long: Probable tRNA (uracil-O(2)-)-methyltransferase (521 aa).

Belongs to the TRM44 family.

Its subcellular location is the cytoplasm. It catalyses the reaction uridine(44) in tRNA(Ser) + S-adenosyl-L-methionine = 2'-O-methyluridine(44) in tRNA(Ser) + S-adenosyl-L-homocysteine + H(+). In terms of biological role, probable adenosyl-L-methionine (AdoMet)-dependent tRNA (uracil-O(2)-)-methyltransferase. The sequence is that of Probable tRNA (uracil-O(2)-)-methyltransferase (trmt44) from Drosophila melanogaster (Fruit fly).